The sequence spans 493 residues: Ubiquitin carboxyl-terminal hydrolase 14 (493 aa).

Residues 4–80 (YSVTVKWGKE…MMGSADALPE (77 aa)) form the Ubiquitin-like domain. Threonine 52 is modified (phosphothreonine). Residues 105-483 (CGLTNLGNTC…IAYVLLYGPR (379 aa)) enclose the USP domain. The Nucleophile role is filled by cysteine 114. Phosphoserine occurs at positions 143 and 148. Threonine 235 is modified (phosphothreonine). Serine 237, serine 302, and serine 432 each carry phosphoserine. Histidine 435 acts as the Proton acceptor in catalysis. Lysine 449 bears the N6-acetyllysine mark.

The protein belongs to the peptidase C19 family. USP14/UBP6 subfamily. In terms of assembly, homodimer (Potential). Associates with the 26S proteasome. Interacts with FANCC, CXCR4 and ERN1. Interacts with TRIM14; this interaction recruits USP14 to cleave ubiquitin chains of CGAS and KDM4D.

It is found in the cytoplasm. Its subcellular location is the cell membrane. It catalyses the reaction Thiol-dependent hydrolysis of ester, thioester, amide, peptide and isopeptide bonds formed by the C-terminal Gly of ubiquitin (a 76-residue protein attached to proteins as an intracellular targeting signal).. Proteasome-associated deubiquitinase which releases ubiquitin from the proteasome targeted ubiquitinated proteins. Ensures the regeneration of ubiquitin at the proteasome. Is a reversibly associated subunit of the proteasome and a large fraction of proteasome-free protein exists within the cell. Required for the degradation of the chemokine receptor CXCR4 which is critical for CXCL12-induced cell chemotaxis. Also serves as a physiological inhibitor of endoplasmic reticulum-associated degradation (ERAD) under the non-stressed condition by inhibiting the degradation of unfolded endoplasmic reticulum proteins via interaction with ERN1. Indispensable for synaptic development and function at neuromuscular junctions (NMJs). Plays a role in the innate immune defense against viruses by stabilizing the viral DNA sensor CGAS and thus inhibiting its autophagic degradation. Inhibits OPTN-mediated selective autophagic degradation of KDM4D and thereby negatively regulates H3K9me2 and H3K9me3. The chain is Ubiquitin carboxyl-terminal hydrolase 14 (USP14) from Pan troglodytes (Chimpanzee).